The chain runs to 717 residues: Serine/threonine-protein kinase STE11 (717 aa).

The region spanning 20-84 (NDLPFVQLFL…LRKSKSFQRD (65 aa)) is the SAM domain. Residue Ser323 is modified to Phosphoserine. The 298-residue stretch at 415 to 712 (WLKGACIGSG…ALELLQHPWL (298 aa)) folds into the Protein kinase domain. Residues 421–429 (IGSGSFGSV) and Lys444 each bind ATP. Residues 452–466 (NIGVPTDNNKQANSD) are compositionally biased toward polar residues. Residues 452–481 (NIGVPTDNNKQANSDENNEQEEQQEKIEDV) are disordered. At Ser465 the chain carries Phosphoserine. Residue Asp579 is the Proton acceptor of the active site.

The protein belongs to the protein kinase superfamily. STE Ser/Thr protein kinase family. MAP kinase kinase kinase subfamily. As to quaternary structure, homodimer. Interacts (via SAM domain) with STE50 (via SAM domain). Interacts with PBS2 and SHO1.

The catalysed reaction is L-seryl-[protein] + ATP = O-phospho-L-seryl-[protein] + ADP + H(+). It carries out the reaction L-threonyl-[protein] + ATP = O-phospho-L-threonyl-[protein] + ADP + H(+). Functionally, serine/threonine protein kinase required for cell-type-specific transcription and signal transduction in yeast. It is thought that it phosphorylates the STE7 protein kinase which itself, phosphorylates the FUS3 and or KSS1 kinases. The polypeptide is Serine/threonine-protein kinase STE11 (STE11) (Saccharomyces cerevisiae (strain ATCC 204508 / S288c) (Baker's yeast)).